The following is a 247-amino-acid chain: Sugar fermentation stimulation protein homolog (247 aa).

This sequence belongs to the SfsA family.

The chain is Sugar fermentation stimulation protein homolog from Methanococcoides burtonii (strain DSM 6242 / NBRC 107633 / OCM 468 / ACE-M).